Consider the following 841-residue polypeptide: GRIP1-associated protein 1 (841 aa).

Ala-2 carries the post-translational modification N-acetylalanine. Coiled coils occupy residues 4-161 (ALSE…YGKE) and 208-641 (EQLQ…NSKS). 2 disordered regions span residues 532–551 (AEES…KQCR) and 558–580 (LKGK…EERD). A phosphoserine mark is found at Ser-655, Ser-666, Ser-668, Ser-669, Ser-688, Ser-690, Ser-691, and Ser-692. A disordered region spans residues 681–706 (SSAVPARSLSSSPQAQPPRPAELSDE). Over residues 682–694 (SAVPARSLSSSPQ) the composition is skewed to low complexity. 2 coiled-coil regions span residues 701–735 (AELS…LEVS) and 785–814 (DENL…KDME).

As to quaternary structure, interacts with GRIP1, GRIP2 and AMPA receptors. Interacts (via C-terminus) with MAPK8/JNK1 and MAP3K1/MEKK1; the interaction promotes MAP3K1-mediated phosphorylation of MAPK8. Interacts (via N-terminus) with RAB4A (in GTP-bound form). Interacts (via C-terminus) with STX12. Proteolytically cleaved by caspase-3. A minor C-terminal proteolytic fragment of 30 kDa is produced. Proteolytic cleavage is required for JNK signaling activation.

The protein localises to the early endosome membrane. It is found in the recycling endosome membrane. Its subcellular location is the cell projection. The protein resides in the axon. It localises to the dendrite. The protein localises to the synapse. In terms of biological role, regulates the endosomal recycling back to the neuronal plasma membrane, possibly by connecting early and late recycling endosomal domains and promoting segregation of recycling endosomes from early endosomal membranes. Involved in the localization of recycling endosomes to dendritic spines, thereby playing a role in the maintenance of dendritic spine morphology. Required for the activity-induced AMPA receptor recycling to dendrite membranes and for long-term potentiation and synaptic plasticity. Functionally, functions as a scaffold protein to facilitate MAP3K1/MEKK1-mediated activation of the JNK1 kinase by phosphorylation, possibly by bringing MAP3K1/MEKK1 and JNK1 in close proximity. The chain is GRIP1-associated protein 1 from Homo sapiens (Human).